Consider the following 131-residue polypeptide: Small ribosomal subunit protein bS6 (131 aa).

Residues 96 to 131 (ITEASPMAKAKDERDSRRGPAGDRSYDEANAEEIAE) form a disordered region. Over residues 104–122 (KAKDERDSRRGPAGDRSYD) the composition is skewed to basic and acidic residues.

This sequence belongs to the bacterial ribosomal protein bS6 family.

Functionally, binds together with bS18 to 16S ribosomal RNA. In Shewanella oneidensis (strain ATCC 700550 / JCM 31522 / CIP 106686 / LMG 19005 / NCIMB 14063 / MR-1), this protein is Small ribosomal subunit protein bS6.